A 521-amino-acid chain; its full sequence is Lipid-translocating exporter-like protein RTA1 (521 aa).

A run of 7 helical transmembrane segments spans residues Gly-186–Cys-206, Ala-211–Leu-231, Leu-249–Ala-269, Val-292–Ser-312, Leu-332–Phe-352, Thr-371–Val-391, and Glu-418–Val-438. The tract at residues Thr-493–Thr-521 is disordered.

The protein belongs to the lipid-translocating exporter (LTE) (TC 9.A.26.1) family.

It is found in the membrane. Functionally, lipid-translocating exporter-like protein; part of the gene cluster that mediates the biosynthesis of phomenoic acid, a long chain aliphatic carboxylic acid that does not appear to be essential for pathogenicity but may play a role in allowing to outcompete other fungi in the environmental niche via its antifungal properties. The protein is Lipid-translocating exporter-like protein RTA1 of Leptosphaeria maculans (strain JN3 / isolate v23.1.3 / race Av1-4-5-6-7-8) (Blackleg fungus).